The primary structure comprises 562 residues: Formate--tetrahydrofolate ligase (562 aa).

71–78 is an ATP binding site; the sequence is TPAGEGKS.

Belongs to the formate--tetrahydrofolate ligase family.

It carries out the reaction (6S)-5,6,7,8-tetrahydrofolate + formate + ATP = (6R)-10-formyltetrahydrofolate + ADP + phosphate. Its pathway is one-carbon metabolism; tetrahydrofolate interconversion. The sequence is that of Formate--tetrahydrofolate ligase from Bacillus cereus (strain ATCC 14579 / DSM 31 / CCUG 7414 / JCM 2152 / NBRC 15305 / NCIMB 9373 / NCTC 2599 / NRRL B-3711).